The chain runs to 470 residues: Desmin (470 aa).

The interval 2-108 is head; sequence SQAYSSSQRV…QEFLTTRTNE (107 aa). Position 7 is a phosphoserine; by CDK1 (S7). At S12 the chain carries Phosphoserine; by AURKB. R16 carries the omega-N-methylarginine modification. T17 carries the phosphothreonine; by AURKB and ROCK1 modification. S28 is subject to Phosphoserine; by CDK1. S31 is modified (phosphoserine). S32 bears the Phosphoserine; by CDK1 mark. The residue at position 37 (R37) is an Asymmetric dimethylarginine; alternate. Residue R37 is modified to Omega-N-methylarginine; alternate. S45 is subject to Phosphoserine. R58 is subject to ADP-ribosylarginine. S60 carries the phosphoserine; by AURKB modification. S68 bears the Phosphoserine mark. At R70 the chain carries Omega-N-methylarginine. Phosphothreonine; by ROCK1 occurs at positions 76 and 77. S81 bears the Phosphoserine mark. Residues 108–416 form the IF rod domain; it reads EKVELQELND…KLLEGEESRI (309 aa). Positions 109 to 141 are coil 1A; that stretch reads KVELQELNDRFANYIEKVRFLEQQNAALAAEVN. A linker 1 region spans residues 142-151; sequence RLKGREPTRV. The coil 1B stretch occupies residues 152–252; sequence AELYEEELRE…HEEEIRELQA (101 aa). A linker 12 region spans residues 253–268; sequence QLQEQQVQVEMDMSKP. Residues 268 to 415 are interaction with NEB; the sequence is PDLTAALRDI…RKLLEGEESR (148 aa). Positions 269–287 are coil 2A; that stretch reads DLTAALRDIRAQYETIAAK. The interval 288-295 is linker 2; it reads NISEAEEW. Phosphoserine occurs at positions 290, 358, 361, and 424. Residues 296–412 form a coil 2B region; sequence YKSKVSDLTQ…ATYRKLLEGE (117 aa). The tail stretch occupies residues 413–470; sequence ESRINLPIQTYSALNFRETSPEQRGSEVHTKKTVMIKTIETRDGEVVSEATQQQHEVL. Residues 438–453 are interaction with CRYAB; it reads SEVHTKKTVMIKTIET.

Belongs to the intermediate filament family. Homomer. Interacts with DST. Interacts with MTM1. Interacts with EPPK1; interaction is dependent of higher-order structure of intermediate filament. Interacts with CRYAB. Interacts with NEB (via nebulin repeats 160-164). Interacts (via rod region) with NEBL (via nebulin repeats 1-5). Interacts with ASB2 isoform 1; the interaction targets DES for proteasomal degradation. Interacts with PLEC isoform 1C. Interacts with PKP1. Interacts with FLII. In terms of processing, ADP-ribosylation prevents ability to form intermediate filaments. Phosphorylation at Ser-7, Ser-28 and Ser-32 by CDK1, phosphorylation at Ser-60 by AURKB and phosphorylation at Thr-76 by ROCK1 contribute to efficient separation of desmin intermediate filaments during mitosis. Post-translationally, ubiquitination by a SCF-like complex containing ASB2 isoform 1 leads to proteasomal degradation.

It localises to the cytoplasm. It is found in the myofibril. The protein localises to the sarcomere. Its subcellular location is the z line. The protein resides in the cell membrane. It localises to the sarcolemma. It is found in the nucleus. The protein localises to the cell tip. Its subcellular location is the nucleus envelope. Its function is as follows. Muscle-specific type III intermediate filament essential for proper muscular structure and function. Plays a crucial role in maintaining the structure of sarcomeres, inter-connecting the Z-disks and forming the myofibrils, linking them not only to the sarcolemmal cytoskeleton, but also to the nucleus and mitochondria, thus providing strength for the muscle fiber during activity. In adult striated muscle they form a fibrous network connecting myofibrils to each other and to the plasma membrane from the periphery of the Z-line structures. May act as a sarcomeric microtubule-anchoring protein: specifically associates with detyrosinated tubulin-alpha chains, leading to buckled microtubules and mechanical resistance to contraction. Required for nuclear membrane integrity, via anchoring at the cell tip and nuclear envelope, resulting in maintenance of microtubule-derived intracellular mechanical forces. Contributes to the transcriptional regulation of the NKX2-5 gene in cardiac progenitor cells during a short period of cardiomyogenesis and in cardiac side population stem cells in the adult. Plays a role in maintaining an optimal conformation of nebulette (NEB) on heart muscle sarcomeres to bind and recruit cardiac alpha-actin. This chain is Desmin (DES), found in Homo sapiens (Human).